The primary structure comprises 359 residues: Fructose-bisphosphate aldolase (359 aa).

D-glyceraldehyde 3-phosphate is bound at residue Ser-62. Asp-109 functions as the Proton donor in the catalytic mechanism. His-110, Asp-144, Glu-174, and His-226 together coordinate Zn(2+). Residue Gly-227 coordinates dihydroxyacetone phosphate. His-265 is a binding site for Zn(2+). Dihydroxyacetone phosphate-binding positions include 266–268 and 287–290; these read GGS and NLDT.

The protein belongs to the class II fructose-bisphosphate aldolase family. Homodimer. Requires Zn(2+) as cofactor.

It is found in the cytoplasm. It carries out the reaction beta-D-fructose 1,6-bisphosphate = D-glyceraldehyde 3-phosphate + dihydroxyacetone phosphate. It functions in the pathway carbohydrate degradation; glycolysis; D-glyceraldehyde 3-phosphate and glycerone phosphate from D-glucose: step 4/4. Catalyzes the aldol condensation of dihydroxyacetone phosphate (DHAP or glycerone-phosphate) with glyceraldehyde 3-phosphate (G3P) to form fructose 1,6-bisphosphate (FBP) in gluconeogenesis and the reverse reaction in glycolysis. The polypeptide is Fructose-bisphosphate aldolase (FBA1) (Candida albicans (strain SC5314 / ATCC MYA-2876) (Yeast)).